Reading from the N-terminus, the 424-residue chain is L-glutamine:scyllo-inosose aminotransferase (424 aa).

Positions 1 to 21 (MDSSLAISGGPRLSNREWPRW) are disordered. Lys202 carries the N6-(pyridoxal phosphate)lysine modification.

It belongs to the DegT/DnrJ/EryC1 family. L-glutamine:2-deoxy-scyllo-inosose/scyllo-inosose aminotransferase subfamily. In terms of assembly, homodimer. It depends on pyridoxal 5'-phosphate as a cofactor.

It carries out the reaction scyllo-inosose + L-glutamine = 1-amino-1-deoxy-scyllo-inositol + 2-oxoglutaramate. It functions in the pathway antibiotic biosynthesis; streptomycin biosynthesis. Its function is as follows. Catalyzes the PLP-dependent transamination of scyllo-inosose to form scyllo-inosamine. This chain is L-glutamine:scyllo-inosose aminotransferase (stsC), found in Streptomyces griseus.